Reading from the N-terminus, the 2763-residue chain is Large tegument protein deneddylase (2763 aa).

The deubiquitination activity stretch occupies residues 1–247 (MDIIPPIAVT…CDTYFTDEQY (247 aa)). The region spanning 12 to 237 (AGVGSRNQFD…SSAVTLIYGS (226 aa)) is the Peptidase C76 domain. Active-site residues include Cys32, Asp168, and His170. The interaction with inner tegument protein stretch occupies residues 495–523 (LELFINLTILRLTGFVVENGTRTHHGATS). Positions 2456 to 2476 (VRPAQPAQPAQPAQPAQTVQP) are disordered. 5 consecutive repeat copies span residues 2458–2460 (PAQ), 2461–2463 (PAQ), 2464–2466 (PAQ), 2467–2469 (PAQ), and 2470–2472 (PAQ). Residues 2458-2472 (PAQPAQPAQPAQPAQ) are 5 X 3 AA repeats of P-A-Q. Low complexity predominate over residues 2459-2476 (AQPAQPAQPAQPAQTVQP).

Belongs to the herpesviridae large tegument protein family. Interacts with host CUL1 and CUL4A; these interactions inhibit the E3 ligase activity of cullins. Interacts with inner tegument protein. Interacts with capsid vertex specific component CVC2. Interacts with the major capsid protein/MCP.

The protein localises to the virion tegument. The protein resides in the host cytoplasm. It is found in the host nucleus. It carries out the reaction Thiol-dependent hydrolysis of ester, thioester, amide, peptide and isopeptide bonds formed by the C-terminal Gly of ubiquitin (a 76-residue protein attached to proteins as an intracellular targeting signal).. Large tegument protein that plays multiple roles in the viral cycle. During viral entry, remains associated with the capsid while most of the tegument is detached and participates in the capsid transport toward the host nucleus. Plays a role in the routing of the capsid at the nuclear pore complex and subsequent uncoating. Within the host nucleus, acts as a deneddylase and promotes the degradation of nuclear CRLs (cullin-RING ubiquitin ligases) and thereby stabilizes nuclear CRL substrates, while cytoplasmic CRLs remain unaffected. These modifications prevent host cell cycle S-phase progression and create a favorable environment allowing efficient viral genome replication. Participates later in the secondary envelopment of capsids. Indeed, plays a linker role for the association of the outer viral tegument to the capsids together with the inner tegument protein. This Homo sapiens (Human) protein is Large tegument protein deneddylase.